The following is a 580-amino-acid chain: Protein O-linked-mannose beta-1,4-N-acetylglucosaminyltransferase 2 (580 aa).

The Cytoplasmic portion of the chain corresponds to 1–4 (MHLS). A helical; Signal-anchor for type II membrane protein transmembrane segment spans residues 5–25 (AVLNALLVSVLAAVLWKHVRL). At 26-580 (REHAAALEEE…PFADVLVCNT (555 aa)) the chain is on the lumenal side. N-linked (GlcNAc...) asparagine glycosylation is found at Asn99 and Asn276. The Fibronectin type-III domain occupies 488-580 (ARCQASVQGA…PFADVLVCNT (93 aa)).

The protein belongs to the glycosyltransferase 61 family.

It localises to the endoplasmic reticulum membrane. The catalysed reaction is 3-O-(alpha-D-mannosyl)-L-threonyl-[protein] + UDP-N-acetyl-alpha-D-glucosamine = 3-O-(N-acetyl-beta-D-glucosaminyl-(1-&gt;4)-alpha-D-mannosyl)-L-threonyl-[protein] + UDP + H(+). The protein operates within protein modification; protein glycosylation. In terms of biological role, O-linked mannose beta-1,4-N-acetylglucosaminyltransferase that transfers UDP-N-acetyl-D-glucosamine to the 4-position of the mannose to generate N-acetyl-D-glucosamine-beta-1,4-O-D-mannosylprotein. Involved in the biosynthesis of the phosphorylated O-mannosyl trisaccharide (N-acetylgalactosamine-beta-3-N-acetylglucosamine-beta-4-(phosphate-6-)mannose), a carbohydrate structure present in alpha-dystroglycan (DAG1), which is required for binding laminin G-like domain-containing extracellular proteins with high affinity. The protein is Protein O-linked-mannose beta-1,4-N-acetylglucosaminyltransferase 2 (POMGNT2) of Canis lupus familiaris (Dog).